Reading from the N-terminus, the 104-residue chain is uncharacterized protein (104 aa).

Helical transmembrane passes span 45-65 (LYGI…IGVF) and 70-90 (LYLS…AKGL).

The protein localises to the membrane. This is an uncharacterized protein from Saccharomyces cerevisiae (strain ATCC 204508 / S288c) (Baker's yeast).